Consider the following 549-residue polypeptide: Leucine-rich repeat, immunoglobulin-like domain and transmembrane domain-containing protein 2 (549 aa).

Residues 1–22 form the signal peptide; that stretch reads MAFVFYCFLQVLVSWVIHAVQP. The 32-residue stretch at 23-54 folds into the LRRNT domain; the sequence is FCLPECTCSEESFGRSLQCMSMSLGKIPDNFP. LRR repeat units lie at residues 80–103, 104–125, 128–149, and 152–173; these read SLEY…EDLP, ELRE…AFRA, LLRV…ALQF, and NLIY…VFLN. N-linked (GlcNAc...) asparagine glycosylation is present at N90. The region spanning 200 to 252 is the LRRCT domain; the sequence is NPWLCDCRLRGLAQFVKSVGPPFILVNSYLVCQGPVSKAGQLLHETELGVCMK. The Ig-like domain maps to 253–339; sequence PTISTPSVNV…FNSIGRSSLV (87 aa). A glycan (N-linked (GlcNAc...) asparagine) is linked at N261. The cysteines at positions 274 and 327 are disulfide-linked. In terms of domain architecture, Fibronectin type-III spans 361 to 447; that stretch reads EVSAYVDLRV…QPPSQGQCVV (87 aa). The chain crosses the membrane as a helical span at residues 463-483; the sequence is LLHVTVVLCAVLLALPVGAYV. N491 carries an N-linked (GlcNAc...) asparagine glycan. The segment at 521-549 is disordered; that stretch reads FKDPSGVYEDGESHRVMEEDEEVEKEGIS. Residues 538-549 are compositionally biased toward acidic residues; the sequence is EEDEEVEKEGIS.

In terms of assembly, interacts with LRIT1; may form a heterodimer with LRIT1.

It is found in the membrane. This Mus musculus (Mouse) protein is Leucine-rich repeat, immunoglobulin-like domain and transmembrane domain-containing protein 2 (Lrit2).